Consider the following 442-residue polypeptide: Tyrosine-protein kinase transforming protein RYK (442 aa).

The region spanning 45 to 316 is the Protein kinase domain; the sequence is LSLGKVLGEG…QLKVHLEKLL (272 aa). Residues 51–59 and lysine 77 contribute to the ATP site; that span reads LGEGEFGSV. Catalysis depends on aspartate 181, which acts as the Proton acceptor. Tyrosine 212 carries the post-translational modification Phosphotyrosine; by autocatalysis.

This sequence belongs to the protein kinase superfamily. Tyr protein kinase family. AXL/UFO subfamily.

It localises to the host cell membrane. The catalysed reaction is L-tyrosyl-[protein] + ATP = O-phospho-L-tyrosyl-[protein] + ADP + H(+). The polypeptide is Tyrosine-protein kinase transforming protein RYK (V-RYK) (Avian retrovirus RPL30).